The primary structure comprises 205 residues: Helix-loop-helix protein 4 (205 aa).

Residues methionine 3–valine 16 form a basic motif region. The region spanning methionine 3–leucine 56 is the bHLH domain. The tract at residues histidine 17 to leucine 56 is helix-loop-helix motif.

As to expression, expressed in the ADL sensory neurons.

The protein localises to the nucleus. Functionally, acts as a transcriptional regulator. May mediate transcriptional activation by binding to the E-box motif 5'-CANNTG-3'. Required for the correct morphology, terminal identity and function of the ADL sensory neurons by controlling the expression of the ADL-specific gene repertoire, including chemoreceptor encoding genes, ion channel encoding genes, neuropeptides and the neurotransmitter eat-4. Regulates the expression of the srh-234 chemoreceptor encoding gene in the ADL neurons under feeding conditions. Plays a role in the chemorepulsive response toward ascaroside pheromones mediated by the ADL sensory neurons. The chain is Helix-loop-helix protein 4 (hlh-4) from Caenorhabditis elegans.